The following is a 235-amino-acid chain: Phosphoribosylaminoimidazole-succinocarboxamide synthase (235 aa).

This sequence belongs to the SAICAR synthetase family.

The enzyme catalyses 5-amino-1-(5-phospho-D-ribosyl)imidazole-4-carboxylate + L-aspartate + ATP = (2S)-2-[5-amino-1-(5-phospho-beta-D-ribosyl)imidazole-4-carboxamido]succinate + ADP + phosphate + 2 H(+). It functions in the pathway purine metabolism; IMP biosynthesis via de novo pathway; 5-amino-1-(5-phospho-D-ribosyl)imidazole-4-carboxamide from 5-amino-1-(5-phospho-D-ribosyl)imidazole-4-carboxylate: step 1/2. This chain is Phosphoribosylaminoimidazole-succinocarboxamide synthase, found in Clostridium botulinum (strain Eklund 17B / Type B).